We begin with the raw amino-acid sequence, 867 residues long: Probable beta-glucosidase A (867 aa).

The signal sequence occupies residues 1–18 (MRFSWLEVAVTAASLANA). Asn-67, Asn-218, and Asn-259 each carry an N-linked (GlcNAc...) asparagine glycan. The active site involves Asp-287. N-linked (GlcNAc...) asparagine glycans are attached at residues Asn-322, Asn-329, Asn-361, Asn-449, Asn-530, Asn-549, Asn-571, Asn-675, and Asn-719.

It belongs to the glycosyl hydrolase 3 family.

It is found in the secreted. It catalyses the reaction Hydrolysis of terminal, non-reducing beta-D-glucosyl residues with release of beta-D-glucose.. It functions in the pathway glycan metabolism; cellulose degradation. Beta-glucosidases are one of a number of cellulolytic enzymes involved in the degradation of cellulosic biomass. Catalyzes the last step releasing glucose from the inhibitory cellobiose. This Aspergillus clavatus (strain ATCC 1007 / CBS 513.65 / DSM 816 / NCTC 3887 / NRRL 1 / QM 1276 / 107) protein is Probable beta-glucosidase A (bglA).